A 421-amino-acid polypeptide reads, in one-letter code: Forkhead box protein J1 (421 aa).

Disordered regions lie at residues 1 to 32 and 77 to 110; these read MAESWLRLCGAGPGEEAGPEGGMEEPDALDDS and ADPACLGQPHTPGKPTSSCTSRSAPPGLQAPPPD. The span at 11–21 shows a compositional bias: gly residues; that stretch reads AGPGEEAGPEG. Residues 90 to 99 show a composition bias toward polar residues; sequence KPTSSCTSRS. The segment at residues 120 to 210 is a DNA-binding region (fork-head); that stretch reads VKPPYSYATL…YAERLLSGAF (91 aa).

This sequence belongs to the FOXJ1 family. As to expression, predominantly expressed in tissues containing motile cilia.

It is found in the nucleus. In terms of biological role, transcription factor specifically required for the formation of motile cilia. Acts by activating transcription of genes that mediate assembly of motile cilia, such as CFAP157. Binds the DNA consensus sequences 5'-HWDTGTTTGTTTA-3' or 5'-KTTTGTTGTTKTW-3' (where H is not G, W is A or T, D is not C, and K is G or T). Activates the transcription of a variety of ciliary proteins in the developing brain and lung. This is Forkhead box protein J1 from Mus musculus (Mouse).